A 989-amino-acid chain; its full sequence is Phosphoenolpyruvate carboxylase (989 aa).

Residues H175 and K630 contribute to the active site.

This sequence belongs to the PEPCase type 1 family. Requires Mg(2+) as cofactor.

It carries out the reaction oxaloacetate + phosphate = phosphoenolpyruvate + hydrogencarbonate. Forms oxaloacetate, a four-carbon dicarboxylic acid source for the tricarboxylic acid cycle. In Prochlorococcus marinus (strain MIT 9215), this protein is Phosphoenolpyruvate carboxylase.